The following is a 327-amino-acid chain: Annexin A8-like protein 1 (327 aa).

Annexin repeat units lie at residues 21–92 (FNPD…ALMY), 93–164 (PPYR…CLLQ), 177–249 (ALAL…TVVK), and 253–324 (NLHS…SLVG). Positions 266, 268, 270, and 310 each coordinate Ca(2+).

It belongs to the annexin family.

The polypeptide is Annexin A8-like protein 1 (Homo sapiens (Human)).